Here is a 134-residue protein sequence, read N- to C-terminus: MSEQPAPAPVPVLPAEVADALKRDAAGLVAAVVQQFDTNEVLMLGWMDDEALRRTMTSGRVTFYSRSRQEYWRKGDTSGHVQWVKSVALDCDGDALLVRVDQVGAACHTGTRTCFDGRGLPVVAGDAGAAGNAS.

A Mg(2+)-binding site is contributed by aspartate 90. Residue cysteine 91 participates in Zn(2+) binding. Aspartate 92 and aspartate 94 together coordinate Mg(2+). Zn(2+) contacts are provided by cysteine 107 and cysteine 114.

It belongs to the PRA-CH family. Homodimer. Mg(2+) serves as cofactor. Requires Zn(2+) as cofactor.

The protein localises to the cytoplasm. It catalyses the reaction 1-(5-phospho-beta-D-ribosyl)-5'-AMP + H2O = 1-(5-phospho-beta-D-ribosyl)-5-[(5-phospho-beta-D-ribosylamino)methylideneamino]imidazole-4-carboxamide. The protein operates within amino-acid biosynthesis; L-histidine biosynthesis; L-histidine from 5-phospho-alpha-D-ribose 1-diphosphate: step 3/9. Its function is as follows. Catalyzes the hydrolysis of the adenine ring of phosphoribosyl-AMP. The chain is Phosphoribosyl-AMP cyclohydrolase from Arthrobacter sp. (strain FB24).